We begin with the raw amino-acid sequence, 710 residues long: Interferon-induced GTP-binding protein Mx2 (710 aa).

A disordered region spans residues 1–87 (MSLSFRPLKY…RSKGPENNLY (87 aa)). Composition is skewed to polar residues over residues 39 to 50 (QTMSPPQWQVEE) and 58 to 79 (NNFS…QQRS). The 272-residue stretch at 112 to 383 (DLALPAIAVI…LIWHINKSLP (272 aa)) folds into the Dynamin-type G domain. The G1 motif stretch occupies residues 122–129 (GDQSSGKS). 122-129 (GDQSSGKS) contributes to the GTP binding site. The G2 motif stretch occupies residues 147 to 149 (ITR). The G3 motif stretch occupies residues 221 to 224 (DLPG). Residues 221–225 (DLPGI) and 290–293 (TKPD) each bind GTP. The tract at residues 290-293 (TKPD) is G4 motif. Residues 322–325 (KCRG) form a G5 motif region. A GED domain is found at 619 to 710 (IVEIGVHLNA…ALYEFPHFKG (92 aa)).

Belongs to the TRAFAC class dynamin-like GTPase superfamily. Dynamin/Fzo/YdjA family.

It localises to the cytoplasm. It is found in the nucleus. Interferon-induced dynamin-like GTPase with antiviral activity against vesicular stomatitis virus (VSV). The protein is Interferon-induced GTP-binding protein Mx2 (MX2) of Bubalus bubalis (Domestic water buffalo).